A 582-amino-acid polypeptide reads, in one-letter code: Aspartate--tRNA ligase (582 aa).

Residue Glu174 participates in L-aspartate binding. The tract at residues Gln198–Lys201 is aspartate. Arg220 lines the L-aspartate pocket. ATP contacts are provided by residues Arg220–Glu222 and Gln229. His443 provides a ligand contact to L-aspartate. Glu477 serves as a coordination point for ATP. An L-aspartate-binding site is contributed by Arg484. Gly529–Arg532 provides a ligand contact to ATP.

It belongs to the class-II aminoacyl-tRNA synthetase family. Type 1 subfamily. In terms of assembly, homodimer.

It is found in the cytoplasm. The catalysed reaction is tRNA(Asp) + L-aspartate + ATP = L-aspartyl-tRNA(Asp) + AMP + diphosphate. In terms of biological role, catalyzes the attachment of L-aspartate to tRNA(Asp) in a two-step reaction: L-aspartate is first activated by ATP to form Asp-AMP and then transferred to the acceptor end of tRNA(Asp). The sequence is that of Aspartate--tRNA ligase from Streptococcus equi subsp. zooepidemicus (strain MGCS10565).